The following is a 690-amino-acid chain: Elongation factor G (690 aa).

One can recognise a tr-type G domain in the interval 8–283 (EDYRNFGIMA…AVVDYLPSPV (276 aa)). GTP contacts are provided by residues 17–24 (AHIDAGKT), 81–85 (DTPGH), and 135–138 (NKMD).

This sequence belongs to the TRAFAC class translation factor GTPase superfamily. Classic translation factor GTPase family. EF-G/EF-2 subfamily.

Its subcellular location is the cytoplasm. Catalyzes the GTP-dependent ribosomal translocation step during translation elongation. During this step, the ribosome changes from the pre-translocational (PRE) to the post-translocational (POST) state as the newly formed A-site-bound peptidyl-tRNA and P-site-bound deacylated tRNA move to the P and E sites, respectively. Catalyzes the coordinated movement of the two tRNA molecules, the mRNA and conformational changes in the ribosome. This Rhodopseudomonas palustris (strain HaA2) protein is Elongation factor G.